Consider the following 30-residue polypeptide: Dermaseptin-3.1TR (30 aa).

In terms of tissue distribution, expressed by the skin glands.

The protein localises to the secreted. Its function is as follows. Has antimicrobial activity. This chain is Dermaseptin-3.1TR, found in Phyllomedusa trinitatis (Trinidad leaf frog).